We begin with the raw amino-acid sequence, 434 residues long: Methylenetetrahydrofolate--tRNA-(uracil-5-)-methyltransferase TrmFO (434 aa).

Residue 8–13 (GAGLAG) participates in FAD binding.

Belongs to the MnmG family. TrmFO subfamily. It depends on FAD as a cofactor.

The protein resides in the cytoplasm. It carries out the reaction uridine(54) in tRNA + (6R)-5,10-methylene-5,6,7,8-tetrahydrofolate + NADH + H(+) = 5-methyluridine(54) in tRNA + (6S)-5,6,7,8-tetrahydrofolate + NAD(+). The catalysed reaction is uridine(54) in tRNA + (6R)-5,10-methylene-5,6,7,8-tetrahydrofolate + NADPH + H(+) = 5-methyluridine(54) in tRNA + (6S)-5,6,7,8-tetrahydrofolate + NADP(+). Functionally, catalyzes the folate-dependent formation of 5-methyl-uridine at position 54 (M-5-U54) in all tRNAs. This is Methylenetetrahydrofolate--tRNA-(uracil-5-)-methyltransferase TrmFO from Exiguobacterium sibiricum (strain DSM 17290 / CCUG 55495 / CIP 109462 / JCM 13490 / 255-15).